Reading from the N-terminus, the 508-residue chain is GMP synthase [glutamine-hydrolyzing] (508 aa).

One can recognise a Glutamine amidotransferase type-1 domain in the interval 1 to 189; that stretch reads MILVLDFGSQ…ALLVCGCEKT (189 aa). Cysteine 78 serves as the catalytic Nucleophile. Residues histidine 163 and glutamate 165 contribute to the active site. One can recognise a GMPS ATP-PPase domain in the interval 190–383; that stretch reads WGMQHFAQRE…LGVSQDFLMH (194 aa). Residue 217–223 coordinates ATP; that stretch reads SGGVDST.

In terms of assembly, homodimer.

The catalysed reaction is XMP + L-glutamine + ATP + H2O = GMP + L-glutamate + AMP + diphosphate + 2 H(+). The protein operates within purine metabolism; GMP biosynthesis; GMP from XMP (L-Gln route): step 1/1. Functionally, catalyzes the synthesis of GMP from XMP. This chain is GMP synthase [glutamine-hydrolyzing], found in Helicobacter pylori (strain G27).